A 310-amino-acid chain; its full sequence is Glutarate 2-hydroxylase (310 aa).

3 residues coordinate Fe cation: His-160, Asp-162, and His-277.

It belongs to the glutarate hydroxylase family. As to quaternary structure, homotetramer. Fe(2+) serves as cofactor.

The enzyme catalyses glutarate + 2-oxoglutarate + O2 = (S)-2-hydroxyglutarate + succinate + CO2. The protein operates within amino-acid degradation. Its function is as follows. Acts as an alpha-ketoglutarate-dependent dioxygenase catalyzing hydroxylation of glutarate (GA) to L-2-hydroxyglutarate (L2HG). Functions in a L-lysine degradation pathway that proceeds via cadaverine, glutarate and L-2-hydroxyglutarate. In Shigella flexneri, this protein is Glutarate 2-hydroxylase.